The sequence spans 86 residues: Conotoxin S6.10 (86 aa).

A signal peptide spans 1–22 (MKLTCVLIIAVLFLTACQLATA). Positions 23–45 (KTYSKGRQKHRALRSTDKNIKLT) are excised as a propeptide. 3 disulfide bridges follow: cysteine 48–cysteine 62, cysteine 55–cysteine 66, and cysteine 61–cysteine 73.

Belongs to the conotoxin O1 superfamily. Expressed by the venom duct.

It is found in the secreted. The sequence is that of Conotoxin S6.10 from Conus striatus (Striated cone).